Here is a 171-residue protein sequence, read N- to C-terminus: Sec-independent protein translocase protein TatB (171 aa).

A helical transmembrane segment spans residues 1–21 (MFDIGFSELLLVFIIGLVVLG). The interval 117–171 (KDNEAAHEGVTPAAAQTQASSPEQKPETTPEPVVKPAADAEPKTAAPSPSSSDKP) is disordered. Residues 130–139 (AAQTQASSPE) show a composition bias toward polar residues.

It belongs to the TatB family. The Tat system comprises two distinct complexes: a TatABC complex, containing multiple copies of TatA, TatB and TatC subunits, and a separate TatA complex, containing only TatA subunits. Substrates initially bind to the TatABC complex, which probably triggers association of the separate TatA complex to form the active translocon.

It is found in the cell inner membrane. In terms of biological role, part of the twin-arginine translocation (Tat) system that transports large folded proteins containing a characteristic twin-arginine motif in their signal peptide across membranes. Together with TatC, TatB is part of a receptor directly interacting with Tat signal peptides. TatB may form an oligomeric binding site that transiently accommodates folded Tat precursor proteins before their translocation. This Escherichia coli O157:H7 protein is Sec-independent protein translocase protein TatB.